Consider the following 51-residue polypeptide: Defensin-like protein 2A (51 aa).

The residue at position 1 (Gln-1) is a Pyrrolidone carboxylic acid. Intrachain disulfides connect Cys-4–Cys-51, Cys-15–Cys-36, Cys-21–Cys-45, and Cys-25–Cys-47. Phosphoserine; by CPK is present on Ser-8.

As to quaternary structure, forms oligomers in its native state.

Functionally, possesses antifungal activity sensitive to inorganic cations. The sequence is that of Defensin-like protein 2A from Sinapis alba (White mustard).